A 69-amino-acid polypeptide reads, in one-letter code: DNA-directed RNA polymerase subunit epsilon (69 aa).

The protein belongs to the RNA polymerase subunit epsilon family. As to quaternary structure, RNAP is composed of a core of 2 alpha, a beta and a beta' subunit. The core is associated with a delta subunit, and at least one of epsilon or omega. When a sigma factor is associated with the core the holoenzyme is formed, which can initiate transcription.

The enzyme catalyses RNA(n) + a ribonucleoside 5'-triphosphate = RNA(n+1) + diphosphate. A non-essential component of RNA polymerase (RNAP). This chain is DNA-directed RNA polymerase subunit epsilon, found in Halalkalibacterium halodurans (strain ATCC BAA-125 / DSM 18197 / FERM 7344 / JCM 9153 / C-125) (Bacillus halodurans).